An 86-amino-acid polypeptide reads, in one-letter code: Omega-theraphotoxin-Hhn1c (86 aa).

Residues 1–21 (MKSIVFVALFGLALLAVVCSA) form the signal peptide. Residues 22–50 (SEDAHKELLKEVVRAMVVDKTDAVQAEER) constitute a propeptide that is removed on maturation. Disulfide bonds link Cys-52/Cys-66, Cys-59/Cys-71, and Cys-65/Cys-78.

The protein belongs to the neurotoxin 10 (Hwtx-1) family. 17 (Hntx-9) subfamily. Expressed by the venom gland.

It is found in the secreted. Ion channel inhibitor. The sequence is that of Omega-theraphotoxin-Hhn1c from Cyriopagopus hainanus (Chinese bird spider).